The sequence spans 195 residues: Glutathione S-transferase class-mu 26 kDa isozyme (195 aa).

The region spanning 1–83 (MAPKLGYWKI…YIADKHNMLG (83 aa)) is the GST N-terminal domain. Glutathione contacts are provided by residues 7 to 8 (YW), 41 to 45 (WRNEK), 54 to 55 (NL), and 67 to 68 (QS). The GST C-terminal domain maps to 85–195 (CPKERAEISM…TFGGGDAPPK (111 aa)). Substrate is bound at residue Y111.

It belongs to the GST superfamily. Mu family. As to quaternary structure, homodimer.

The catalysed reaction is RX + glutathione = an S-substituted glutathione + a halide anion + H(+). Its function is as follows. Conjugation of reduced glutathione to a wide number of exogenous and endogenous hydrophobic electrophiles. Functionally, GST isoenzymes appear to play a central role in the parasite detoxification system. Other functions are also suspected including a role in increasing the solubility of haematin in the parasite gut. In Schistosoma mansoni (Blood fluke), this protein is Glutathione S-transferase class-mu 26 kDa isozyme.